We begin with the raw amino-acid sequence, 372 residues long: Galanin receptor type 2 (372 aa).

Residues 1–28 (MNGSGSQGAENTSQEGGSGGWQPEAVLV) lie on the Extracellular side of the membrane. 2 N-linked (GlcNAc...) asparagine glycosylation sites follow: asparagine 2 and asparagine 11. Residues 29–49 (PLFFALIFLVGTVGNALVLAV) form a helical membrane-spanning segment. Topologically, residues 50-60 (LLRGGQAVSTT) are cytoplasmic. Residues 61–81 (NLFILNLGVADLCFILCCVPF) traverse the membrane as a helical segment. The Extracellular portion of the chain corresponds to 82–99 (QATIYTLDDWVFGSLLCK). Cysteine 98 and cysteine 175 are disulfide-bonded. Residues 100–121 (AVHFLIFLTMHASSFTLAAVSL) traverse the membrane as a helical segment. The Cytoplasmic segment spans residues 122–141 (DRYLAIRYPLHSRELRTPRN). A helical transmembrane segment spans residues 142–162 (ALAAIGLIWGLALLFSGPYLS). Topologically, residues 163–187 (YYRQSQLANLTVCHPAWSAPRRRAM) are extracellular. A helical membrane pass occupies residues 188 to 208 (DLCTFVFSYLLPVLVLSLTYA). At 209–237 (RTLRYLWRTVDPVTAGSGSQRAKRKVTRM) the chain is on the cytoplasmic side. A helical membrane pass occupies residues 238 to 258 (IIIVAVLFCLCWMPHHALILC). Residues 259-260 (VW) are Extracellular-facing. The helical transmembrane segment at 261–281 (FGRFPLTRATYALRILSHLVS) threads the bilayer. Residues 282-372 (YANSCVNPIV…ASSRTLDPAC (91 aa)) lie on the Cytoplasmic side of the membrane. The interval 353-372 (VPPPALPNCTASSRTLDPAC) is disordered. The segment covering 361-372 (CTASSRTLDPAC) has biased composition (polar residues).

The protein belongs to the G-protein coupled receptor 1 family.

It localises to the cell membrane. Functionally, receptor for the hormone galanin, GALP and spexin-1. The activity of this receptor is mediated by G proteins that activate the phospholipase C/protein kinase C pathway (via G(q)) and that inhibit adenylyl cyclase (via G(i)). The protein is Galanin receptor type 2 (Galr2) of Rattus norvegicus (Rat).